The primary structure comprises 202 residues: Nucleoside triphosphate pyrophosphatase (202 aa).

Asp-77 functions as the Proton acceptor in the catalytic mechanism.

The protein belongs to the Maf family. A divalent metal cation is required as a cofactor.

The protein resides in the cytoplasm. The enzyme catalyses a ribonucleoside 5'-triphosphate + H2O = a ribonucleoside 5'-phosphate + diphosphate + H(+). The catalysed reaction is a 2'-deoxyribonucleoside 5'-triphosphate + H2O = a 2'-deoxyribonucleoside 5'-phosphate + diphosphate + H(+). Its function is as follows. Nucleoside triphosphate pyrophosphatase. May have a dual role in cell division arrest and in preventing the incorporation of modified nucleotides into cellular nucleic acids. The protein is Nucleoside triphosphate pyrophosphatase of Rickettsia canadensis (strain McKiel).